Here is an 863-residue protein sequence, read N- to C-terminus: Oleate activated transcription factor 3 (863 aa).

A DNA-binding region (zn(2)-C6 fungal-type) is located at residues Cys19–Cys47. Residues Asp52–Leu63 show a composition bias toward polar residues. A disordered region spans residues Asp52–Pro81.

The protein belongs to the OAF3 family.

The protein localises to the cytoplasm. It is found in the nucleus. It localises to the mitochondrion. Its function is as follows. Transcriptional inhibitor with a significantly increased number of target genes in response to oleate. This chain is Oleate activated transcription factor 3 (OAF3), found in Saccharomyces cerevisiae (strain RM11-1a) (Baker's yeast).